A 426-amino-acid polypeptide reads, in one-letter code: Enolase (426 aa).

Position 162 (glutamine 162) interacts with (2R)-2-phosphoglycerate. Glutamate 204 acts as the Proton donor in catalysis. 3 residues coordinate Mg(2+): aspartate 241, glutamate 284, and aspartate 311. 4 residues coordinate (2R)-2-phosphoglycerate: lysine 336, arginine 365, serine 366, and lysine 387. Lysine 336 functions as the Proton acceptor in the catalytic mechanism.

It belongs to the enolase family. As to quaternary structure, component of the RNA degradosome, a multiprotein complex involved in RNA processing and mRNA degradation. It depends on Mg(2+) as a cofactor.

Its subcellular location is the cytoplasm. It localises to the secreted. The protein localises to the cell surface. It carries out the reaction (2R)-2-phosphoglycerate = phosphoenolpyruvate + H2O. It functions in the pathway carbohydrate degradation; glycolysis; pyruvate from D-glyceraldehyde 3-phosphate: step 4/5. Its function is as follows. Catalyzes the reversible conversion of 2-phosphoglycerate (2-PG) into phosphoenolpyruvate (PEP). It is essential for the degradation of carbohydrates via glycolysis. The protein is Enolase of Hydrogenovibrio crunogenus (strain DSM 25203 / XCL-2) (Thiomicrospira crunogena).